The following is a 798-amino-acid chain: Cold shock domain-containing protein E1 (798 aa).

Residue Met-1 is modified to N-acetylmethionine. One can recognise a CSD 1 domain in the interval 26 to 87 (ETGVIEKLLT…RTGKPIAVKL (62 aa)). Lys-81 is modified (N6-acetyllysine). Lys-91 participates in a covalent cross-link: Glycyl lysine isopeptide (Lys-Gly) (interchain with G-Cter in SUMO2). Ser-123 bears the Phosphoserine mark. In terms of domain architecture, CSD 2; truncated spans 136–179 (VFYLTYTPEDVEGNVQLETGDKINFVIDNNKHTGAVSARNIMLL). The 60-residue stretch at 186–245 (CQGVVCAMKEAFGFIERGDVVKEIFFHYSEFKGDLETLQPGDDVEFTIKDRNGKEVATDV) folds into the CSD 3 domain. Ser-276 carries the phosphoserine modification. The CSD 4; truncated domain occupies 297 to 337 (LPFGDKDTKSKVTLLEGDHVRFNISTDRRDKLERATNIEVL). CSD domains follow at residues 349–410 (EMGV…AIRI) and 447–507 (NKGK…ATCV). Ser-514 carries the phosphoserine modification. The region spanning 519–579 (LLGYVATLKD…KGNKVSAEKV (61 aa)) is the CSD 7 domain. Position 584 is a phosphoserine (Ser-584). 2 CSD domains span residues 610 to 670 (PTQT…AYNI) and 674 to 735 (RRAT…ACNV). Positions 748–789 (PRPDRLVNRLKNITLDDASAPRLMVLRQPRGPDNSMGFGAER) constitute an SUZ-C domain. Phosphothreonine is present on Thr-761.

It belongs to the UNR family. Component of a multi subunit autoregulatory ribonucleoprotein complex (ARC), at least composed of IGF2BP1, PABPC1 and CSDE1. Interacts with STRAP. Part of a complex associated with the FOS mCRD domain and consisting of PABPC1, PAIP1, HNRPD and SYNCRIP. The interaction with PABPC1 is direct and RNA-independent. Interacts with EIF4ENIF1/4E-T.

It localises to the cytoplasm. The protein resides in the stress granule. The protein localises to the P-body. RNA-binding protein involved in translationally coupled mRNA turnover. Implicated with other RNA-binding proteins in the cytoplasmic deadenylation/translational and decay interplay of the FOS mRNA mediated by the major coding-region determinant of instability (mCRD) domain. Required for efficient formation of stress granules. Functionally, (Microbial infection) Required for internal initiation of translation of human rhinovirus RNA. The polypeptide is Cold shock domain-containing protein E1 (Homo sapiens (Human)).